Reading from the N-terminus, the 583-residue chain is Multidrug transporter QDR2 (583 aa).

Positions glutamate 23–glutamate 46 are disordered. Asparagine 60 carries N-linked (GlcNAc...) asparagine glycosylation. The chain crosses the membrane as a helical span at residues alanine 88–isoleucine 108. The N-linked (GlcNAc...) asparagine glycan is linked to asparagine 120. 5 consecutive transmembrane segments (helical) span residues isoleucine 121–alanine 141, proline 148–glutamine 168, cysteine 178–valine 198, valine 208–glycine 228, and isoleucine 238–proline 258. Asparagine 267 is a glycosylation site (N-linked (GlcNAc...) asparagine). 2 consecutive transmembrane segments (helical) span residues isoleucine 323–leucine 342 and valine 354–threonine 374. The N-linked (GlcNAc...) asparagine glycan is linked to asparagine 380. The next 4 helical transmembrane spans lie at histidine 432–isoleucine 452, leucine 458–phenylalanine 478, threonine 493–leucine 513, and glycine 524–leucine 544.

It belongs to the major facilitator superfamily. CAR1 family.

It is found in the cell membrane. In terms of biological role, multidrug resistance transporter involved in resistance to the antifungal drugs miconazole, tioconazole, clotrimazole, and ketoconazole; as well as to quinidine. Decreases the intracellular accumulation of clotrimazole in and plays a role in the extrusion of this antifungal from preloaded cells. This chain is Multidrug transporter QDR2, found in Candida glabrata (strain ATCC 2001 / BCRC 20586 / JCM 3761 / NBRC 0622 / NRRL Y-65 / CBS 138) (Yeast).